Reading from the N-terminus, the 570-residue chain is Cation/calcium exchanger 1 (570 aa).

The next 13 helical transmembrane spans lie at 14–34 (LSLLINIFFIFLIFLHFASQT), 97–117 (SPVLGHLVLSAWLFVLFYLLG), 141–161 (MAGVTLLSLGNGAPDLFSSVV), 176–196 (ILGGAFFVSSFVVGTICVLIG), 212–232 (VFLLVALCCLGLIIFIGKVTI), 235–255 (ALCYLSIYLLYVGFLSVSHFF), 344–364 (CAVVSTAIAPVLLTELYCSHY), 371–391 (LILYIISGSIGLIVGILAYLT), 401–421 (FSLVWLLGGFTMSVTWTYMIA), 427–447 (LLISLGNIFGISPSVLGLTVL), 479–499 (YAGPLFNTVIGLGVPLVISSL), 513–533 (SLLETLGFLMVGLLWALVIMP), and 546–566 (GLLAIYLCFLSLRLARVFGVL).

This sequence belongs to the Ca(2+):cation antiporter (CaCA) (TC 2.A.19) family. Cation/calcium exchanger (CCX) subfamily. As to expression, expressed in roots, leaves, stems and flowers.

The protein localises to the vacuole membrane. Functionally, vacuolar membrane-localized H(+)-dependent K(+) and Na(+) transporter. The polypeptide is Cation/calcium exchanger 1 (CCX1) (Arabidopsis thaliana (Mouse-ear cress)).